Reading from the N-terminus, the 452-residue chain is Phosphoglucosamine mutase (452 aa).

The active-site Phosphoserine intermediate is serine 101. Residues serine 101, aspartate 241, aspartate 243, and aspartate 245 each contribute to the Mg(2+) site. Serine 101 carries the post-translational modification Phosphoserine.

It belongs to the phosphohexose mutase family. It depends on Mg(2+) as a cofactor. Activated by phosphorylation.

The catalysed reaction is alpha-D-glucosamine 1-phosphate = D-glucosamine 6-phosphate. Its function is as follows. Catalyzes the conversion of glucosamine-6-phosphate to glucosamine-1-phosphate. This chain is Phosphoglucosamine mutase, found in Lactococcus lactis subsp. lactis (strain IL1403) (Streptococcus lactis).